The following is a 224-amino-acid chain: Peroxiredoxin-6 (224 aa).

A Thioredoxin domain is found at 5-169 (LLLGDEAPNF…ILRVVISLQL (165 aa)). A required and sufficient for targeting to lysosomes and lamellar bodies region spans residues 31–40 (DSWGILFSHP). Threonine 44 is modified (phosphothreonine). The active-site Cysteine sulfenic acid (-SOH) intermediate; for peroxidase activity is the cysteine 47. N6-acetyllysine is present on lysine 63. Tyrosine 89 carries the phosphotyrosine modification. The active-site For phospholipase activity is aspartate 140. Phosphothreonine; by MAPK is present on threonine 177. Lysine 209 is modified (N6-acetyllysine; alternate). N6-succinyllysine; alternate is present on lysine 209.

This sequence belongs to the peroxiredoxin family. Prx6 subfamily. As to quaternary structure, homodimer. Interacts with GSTP1; mediates PRDX6 glutathionylation and regeneration. Interacts with APEX1. Interacts with STH. May interact with FAM168B. May interact with HTR2A. In terms of processing, irreversibly inactivated by overoxidation of Cys-47 to sulfinic acid (Cys-SO(2)H) and sulfonic acid (Cys-SO(3)H) forms upon oxidative stress. Post-translationally, phosphorylation at Thr-177 by MAP kinases increases the phospholipase activity of the enzyme. The phosphorylated form exhibits a greater lysophosphatidylcholine acyltransferase activity compared to the non-phosphorylated form.

The protein resides in the cytoplasm. It is found in the lysosome. It carries out the reaction a hydroperoxide + 2 glutathione = an alcohol + glutathione disulfide + H2O. It catalyses the reaction a 1,2-diacyl-sn-glycero-3-phosphocholine + H2O = a 1-acyl-sn-glycero-3-phosphocholine + a fatty acid + H(+). The enzyme catalyses a 1-acyl-sn-glycero-3-phosphocholine + an acyl-CoA = a 1,2-diacyl-sn-glycero-3-phosphocholine + CoA. The catalysed reaction is 1-hexadecanoyl-sn-glycero-3-phosphocholine + hexadecanoyl-CoA = 1,2-dihexadecanoyl-sn-glycero-3-phosphocholine + CoA. It carries out the reaction 1,2-dihexadecanoyl-sn-glycero-3-phosphocholine + H2O = 1-hexadecanoyl-sn-glycero-3-phosphocholine + hexadecanoate + H(+). Its function is as follows. Thiol-specific peroxidase that catalyzes the reduction of hydrogen peroxide and organic hydroperoxides to water and alcohols, respectively. Can reduce H(2)O(2) and short chain organic, fatty acid, and phospholipid hydroperoxides. Also has phospholipase activity, and can therefore either reduce the oxidized sn-2 fatty acyl group of phospholipids (peroxidase activity) or hydrolyze the sn-2 ester bond of phospholipids (phospholipase activity). These activities are dependent on binding to phospholipids at acidic pH and to oxidized phospholipds at cytosolic pH. Plays a role in cell protection against oxidative stress by detoxifying peroxides and in phospholipid homeostasis. Exhibits acyl-CoA-dependent lysophospholipid acyltransferase which mediates the conversion of lysophosphatidylcholine (1-acyl-sn-glycero-3-phosphocholine or LPC) into phosphatidylcholine (1,2-diacyl-sn-glycero-3-phosphocholine or PC). Shows a clear preference for LPC as the lysophospholipid and for palmitoyl CoA as the fatty acyl substrate. The sequence is that of Peroxiredoxin-6 (PRDX6) from Macaca fascicularis (Crab-eating macaque).